The chain runs to 645 residues: Threonine--tRNA ligase (645 aa).

The 62-residue stretch at 1-62 folds into the TGS domain; the sequence is MSIHITFPDG…VEDGSLEIVT (62 aa). The catalytic stretch occupies residues 242–541; the sequence is DHRKLGKELD…LTEVYKGAFP (300 aa). Residues Cys336, His387, and His518 each coordinate Zn(2+).

Belongs to the class-II aminoacyl-tRNA synthetase family. In terms of assembly, homodimer. Zn(2+) is required as a cofactor.

Its subcellular location is the cytoplasm. It catalyses the reaction tRNA(Thr) + L-threonine + ATP = L-threonyl-tRNA(Thr) + AMP + diphosphate + H(+). In terms of biological role, catalyzes the attachment of threonine to tRNA(Thr) in a two-step reaction: L-threonine is first activated by ATP to form Thr-AMP and then transferred to the acceptor end of tRNA(Thr). Also edits incorrectly charged L-seryl-tRNA(Thr). The sequence is that of Threonine--tRNA ligase from Enterococcus faecalis (strain ATCC 700802 / V583).